We begin with the raw amino-acid sequence, 292 residues long: 4-hydroxy-tetrahydrodipicolinate synthase 2 (292 aa).

Threonine 46 provides a ligand contact to pyruvate. Residue tyrosine 134 is the Proton donor/acceptor of the active site. Lysine 162 serves as the catalytic Schiff-base intermediate with substrate. Residue valine 204 coordinates pyruvate.

This sequence belongs to the DapA family. In terms of assembly, homotetramer; dimer of dimers.

It localises to the cytoplasm. The catalysed reaction is L-aspartate 4-semialdehyde + pyruvate = (2S,4S)-4-hydroxy-2,3,4,5-tetrahydrodipicolinate + H2O + H(+). The protein operates within amino-acid biosynthesis; L-lysine biosynthesis via DAP pathway; (S)-tetrahydrodipicolinate from L-aspartate: step 3/4. Its function is as follows. Catalyzes the condensation of (S)-aspartate-beta-semialdehyde [(S)-ASA] and pyruvate to 4-hydroxy-tetrahydrodipicolinate (HTPA). This is 4-hydroxy-tetrahydrodipicolinate synthase 2 from Halalkalibacterium halodurans (strain ATCC BAA-125 / DSM 18197 / FERM 7344 / JCM 9153 / C-125) (Bacillus halodurans).